The following is a 250-amino-acid chain: Adenosine 5'-phosphosulfate reductase (250 aa).

4 residues coordinate [4Fe-4S] cluster: Cys-119, Cys-120, Cys-202, and Cys-205. Cys-230 (nucleophile; cysteine thiosulfonate intermediate) is an active-site residue.

Belongs to the PAPS reductase family. CysH subfamily. [4Fe-4S] cluster is required as a cofactor.

Its subcellular location is the cytoplasm. It carries out the reaction [thioredoxin]-disulfide + sulfite + AMP + 2 H(+) = adenosine 5'-phosphosulfate + [thioredoxin]-dithiol. Its pathway is sulfur metabolism; hydrogen sulfide biosynthesis; sulfite from sulfate. In terms of biological role, catalyzes the formation of sulfite from adenosine 5'-phosphosulfate (APS) using thioredoxin as an electron donor. The sequence is that of Adenosine 5'-phosphosulfate reductase from Burkholderia cepacia (Pseudomonas cepacia).